Here is a 154-residue protein sequence, read N- to C-terminus: S-protein homolog 12 (154 aa).

The signal sequence occupies residues Met1–Gly30.

Belongs to the plant self-incompatibility (S1) protein family.

The protein resides in the secreted. The sequence is that of S-protein homolog 12 from Arabidopsis thaliana (Mouse-ear cress).